The following is a 453-amino-acid chain: F-box protein At4g27050 (453 aa).

Positions 3-51 (TDLISNLPDDVLGKILSLVPTKLAAATSVLSKRWRNLLPLVDSLDFDET) constitute an F-box domain.

In terms of assembly, part of a SCF (ASK-cullin-F-box) protein ligase complex.

It participates in protein modification; protein ubiquitination. In terms of biological role, component of SCF(ASK-cullin-F-box) E3 ubiquitin ligase complexes, which may mediate the ubiquitination and subsequent proteasomal degradation of target proteins. This chain is F-box protein At4g27050, found in Arabidopsis thaliana (Mouse-ear cress).